The sequence spans 506 residues: MIDNVITAIDRVAAEHPTRVAYDYEGTQYTYAQLKEGSDRLAGFFAETLPEHEPIIVYGGQTFDMVEVFLGLSKSGHAYIPIDTHSPNERITQVQDVAHTPAIIEVAPLPIAVPDVQIIRAPELHEAEKTHALISSLQHAVVGDDNYYIIFTSGTTGKPKGVQISHDNLLSYVNWNISDFGLKEGVVAMSQPPYSFDLSVMDLYPTLVLGGTLKALPKEVTDNFKTLFATLPKLGLNEWVSTPSFAEIALLDPNFNQDNYPDLTHFLFCGEELVNKTAQELITRFPKATVYNTYGPTETTVAVTGMAITQDIVDQYPRLPIGFAKPDTEIFVVDEQGNQVSAGTEGELMIVGPSVSKGYLNNPEKTAKAFFNVGSQRGYRSGDLATMTEDGMIFYRGRTDFQVKLHGYRIELEDVDHNLNQVSYIKQASTVPRYNKDHKVAQLIAFAVAKPNDFESDMKLTQAVKAELGKMVMEYMIPQRIIYRDKLPLTANGKVDRKALIAEVNH.

152-153 (TS) serves as a coordination point for ATP. Asp-197 is a binding site for D-alanine. ATP is bound at residue 292–297 (NTYGPT). Val-301 is a binding site for D-alanine. ATP contacts are provided by residues Asp-383, 395 to 398 (YRGR), and Lys-494. Residue Lys-494 coordinates D-alanine.

This sequence belongs to the ATP-dependent AMP-binding enzyme family. DltA subfamily.

The protein resides in the cytoplasm. It carries out the reaction holo-[D-alanyl-carrier protein] + D-alanine + ATP = D-alanyl-[D-alanyl-carrier protein] + AMP + diphosphate. It participates in cell wall biogenesis; lipoteichoic acid biosynthesis. Catalyzes the first step in the D-alanylation of lipoteichoic acid (LTA), the activation of D-alanine and its transfer onto the D-alanyl carrier protein (Dcp) DltC. In an ATP-dependent two-step reaction, forms a high energy D-alanyl-AMP intermediate, followed by transfer of the D-alanyl residue as a thiol ester to the phosphopantheinyl prosthetic group of the Dcp. D-alanylation of LTA plays an important role in modulating the properties of the cell wall in Gram-positive bacteria, influencing the net charge of the cell wall. The chain is D-alanine--D-alanyl carrier protein ligase from Lacticaseibacillus casei (strain BL23) (Lactobacillus casei).